A 280-amino-acid polypeptide reads, in one-letter code: Hematopoietically-expressed homeobox protein HHEX homolog (280 aa).

Disordered stretches follow at residues 1 to 35 and 221 to 280; these read MSTL…GLAP and RRVK…EKEA. Residues 165 to 224 constitute a DNA-binding region (homeobox); that stretch reads RKGGQVRFSNDQTMELEKKFESQKYLSPPERKKLAKLLQLSERQVKTWFQNRRAKWRRVK. Positions 232-252 are enriched in basic and acidic residues; that stretch reads GEGDENSHEKPRDLDRDDFSR.

It is found in the nucleus. Transcription factor that may play a central role in activating or maintaining gene expression in the vegetal pole. Part of a gene regulatory circuit with Erg and Tgif that operates early in mesoderm development. The polypeptide is Hematopoietically-expressed homeobox protein HHEX homolog (Patiria miniata (Bat star)).